The primary structure comprises 68 residues: Large ribosomal subunit protein bL31 (68 aa).

Zn(2+)-binding residues include cysteine 16, cysteine 18, cysteine 36, and cysteine 39.

The protein belongs to the bacterial ribosomal protein bL31 family. Type A subfamily. Part of the 50S ribosomal subunit. The cofactor is Zn(2+).

Its function is as follows. Binds the 23S rRNA. This Sorangium cellulosum (strain So ce56) (Polyangium cellulosum (strain So ce56)) protein is Large ribosomal subunit protein bL31.